Here is a 308-residue protein sequence, read N- to C-terminus: Probable manganese-dependent inorganic pyrophosphatase (308 aa).

Residues His-9, Asp-13, Asp-15, Asp-75, His-97, and Asp-149 each contribute to the Mn(2+) site.

The protein belongs to the PPase class C family. Requires Mn(2+) as cofactor.

It localises to the cytoplasm. It carries out the reaction diphosphate + H2O = 2 phosphate + H(+). In Bacillus pumilus (strain SAFR-032), this protein is Probable manganese-dependent inorganic pyrophosphatase.